We begin with the raw amino-acid sequence, 452 residues long: MKKFTLEEFLDLLKKYNVEEIEGVKIEGDLEIEFEGSSIDLSAIAPLYSMLSEFGNFLYHANMALGYLQRLSAALGIPTPFAAQPQLAPAAPAAPAEVPAVEELKIPAELVRAKFEPYKEEYPGKIEEVVLGATKADGGTREYTVTLGGERSLAFYTFDAPQPHLPAIAIDVFDRRPMLAKAVRMHYEDVLDNPAEWARKCVKKFGADLVTLHLISTDPLLDDTPASEAVKVLEDVLQAVKCPIIVGGSGNKEKDPEVLEKAAEVAEGERIMLASATLDMDWERIANAAKKYGHVVLSWTQMDINNQKTLNRYLLKRVEMPRDSIVMDPTTAALGYGLDYAFTNMERIRISGLKGDTDLNFPISSGTTNAWGAREAWMVDSPIEEDTPWGPRELRGPIWEIITGLTLSLAGVDLFMMMHPVAVAVLKEVFNTLGGKVSGGVADPGEWIFMEV.

Belongs to the CdhD family. Heterodimer of delta and gamma chains. The ACDS complex is made up of alpha, epsilon, beta, gamma and delta chains with a probable stoichiometry of (alpha(2)epsilon(2))(4)-beta(8)-(gamma(1)delta(1))(8).

Functionally, part of a complex that catalyzes the reversible cleavage of acetyl-CoA, allowing autotrophic growth from CO(2). Probably maintains the overall quaternary structure of the ACDS complex. The sequence is that of Acetyl-CoA decarbonylase/synthase complex subunit delta from Archaeoglobus fulgidus (strain ATCC 49558 / DSM 4304 / JCM 9628 / NBRC 100126 / VC-16).